The chain runs to 150 residues: Retinal rod rhodopsin-sensitive cGMP 3',5'-cyclic phosphodiesterase subunit delta (150 aa).

Positions arginine 144–valine 150 are required for association with membranes.

It belongs to the PDE6D/unc-119 family. As to quaternary structure, interacts with the prenylated catalytic subunits of PDE6, an oligomer composed of two catalytic chains (PDE6A and PDE6B) and two inhibitory chains (gamma); has no effect on enzyme activity but promotes the release of the prenylated enzyme from cell membrane. Interacts with prenylated GRK1 and GRK7. Interacts with prenylated Ras family members, including RAP2A and RAP2C. Interacts with prenylated RHEB and NRAS. Interacts with prenylated HRAS and KRAS. Interacts with RAB13 (prenylated form); dissociates RAB13 from membranes. Interacts with prenylated INPP5E. Interacts with RAB28 (prenylated form); the interaction promotes RAB28 delivery to the photoreceptor outer segments. Interacts with RPGR. Interacts with ARL2. Interacts with ARL3; the interaction occurs specifically with the GTP-bound form of ARL3. Interaction with ARL2 and ARL3 promotes release of farnesylated cargo proteins. Widely expressed. Detected in various tissues including spleen, prostate gland, testis, ovary, small intestine, colon, retina, and peripheral blood.

It is found in the cytoplasm. The protein localises to the cytosol. It localises to the cytoplasmic vesicle membrane. The protein resides in the cytoskeleton. Its subcellular location is the cilium basal body. Functionally, promotes the release of prenylated target proteins from cellular membranes. Modulates the activity of prenylated or palmitoylated Ras family members by regulating their subcellular location. Required for normal ciliary targeting of farnesylated target proteins, such as INPP5E. Required for RAB28 localization to the cone cell outer segments in the retina. Modulates the subcellular location of target proteins by acting as a GTP specific dissociation inhibitor (GDI). Increases the affinity of ARL3 for GTP by several orders of magnitude. Stabilizes ARL3-GTP by decreasing the nucleotide dissociation rate. This Homo sapiens (Human) protein is Retinal rod rhodopsin-sensitive cGMP 3',5'-cyclic phosphodiesterase subunit delta (PDE6D).